The primary structure comprises 128 residues: CD59 glycoprotein (128 aa).

The signal sequence occupies residues 1–25 (MGIQGGSVLFGLLLILAVFCHSGHS). Residues 26-108 (LQCYSCPYST…ILENGGTTLS (83 aa)) enclose the UPAR/Ly6 domain. 5 cysteine pairs are disulfide-bonded: cysteine 28-cysteine 51, cysteine 31-cysteine 38, cysteine 44-cysteine 64, cysteine 70-cysteine 88, and cysteine 89-cysteine 94. N-linked (GlcNAc...) asparagine glycosylation occurs at asparagine 43. Residue asparagine 102 is the site of GPI-anchor amidated asparagine attachment. A propeptide spans 103–128 (GGTTLSKKTVLLLVTPFLAAAWSLHP) (removed in mature form).

Interacts with T-cell surface antigen CD2. Post-translationally, N- and O-glycosylated.

The protein resides in the cell membrane. It localises to the secreted. Functionally, potent inhibitor of the complement membrane attack complex (MAC) action, which protects self-cells from damage during complement activation. Acts by binding to the beta-haipins of C8 (C8A and C8B) components of the assembling MAC, forming an intermolecular beta-sheet that prevents incorporation of the multiple copies of C9 required for complete formation of the osmolytic pore. The protein is CD59 glycoprotein of Callithrix sp. (Marmoset).